The primary structure comprises 157 residues: MGYPTLWTDDAKLFEWTKTEQRFNHDDFYGSMPTLTKNLRQGQPVAGSKVHTDYSNGFLNEYSLNQGIVDFGTFKSAITDYHGYEYKNHGYGLALTDTDLLGGSSGSLVFNQDKKISSIYSAATESDSVGYAQLLPVPKDVNGVSLVKYSYDLILWW.

Belongs to the MG067/MG068/MG395 family.

This is an uncharacterized protein from Mycoplasma pneumoniae (strain ATCC 29342 / M129 / Subtype 1) (Mycoplasmoides pneumoniae).